The primary structure comprises 301 residues: Probable alpha-L-glutamate ligase (301 aa).

Residues 104-287 form the ATP-grasp domain; it reads LQLLSRKGVG…IAGMIIEYIE (184 aa). ATP contacts are provided by residues lysine 141, 178–179, aspartate 187, and 211–213; these read EY and RSN. Positions 248, 260, and 262 each coordinate Mg(2+). Mn(2+)-binding residues include aspartate 248, glutamate 260, and asparagine 262.

This sequence belongs to the RimK family. It depends on Mg(2+) as a cofactor. Mn(2+) is required as a cofactor.

The sequence is that of Probable alpha-L-glutamate ligase from Photobacterium profundum (strain SS9).